The sequence spans 854 residues: Valine--tRNA ligase (854 aa).

The short motif at 46-56 (PTVSGDLHIGH) is the 'HIGH' region element. The short motif at 551–555 (KMSKS) is the 'KMSKS' region element. ATP is bound at residue K554.

Belongs to the class-I aminoacyl-tRNA synthetase family. ValS type 2 subfamily. In terms of assembly, monomer.

It localises to the cytoplasm. The enzyme catalyses tRNA(Val) + L-valine + ATP = L-valyl-tRNA(Val) + AMP + diphosphate. Its function is as follows. Catalyzes the attachment of valine to tRNA(Val). As ValRS can inadvertently accommodate and process structurally similar amino acids such as threonine, to avoid such errors, it has a 'posttransfer' editing activity that hydrolyzes mischarged Thr-tRNA(Val) in a tRNA-dependent manner. The chain is Valine--tRNA ligase from Orientia tsutsugamushi (strain Boryong) (Rickettsia tsutsugamushi).